A 187-amino-acid polypeptide reads, in one-letter code: UPF0301 protein lpl0620 (187 aa).

It belongs to the UPF0301 (AlgH) family.

The sequence is that of UPF0301 protein lpl0620 from Legionella pneumophila (strain Lens).